Consider the following 903-residue polypeptide: HTH-type transcriptional regulator MalT (903 aa).

Residue 39–46 (CPAGYGKT) coordinates ATP. The region spanning 832-897 (ELIRTSPLTQ…DAVQQAQRLL (66 aa)) is the HTH luxR-type domain. Residues 856 to 875 (NDQIAGELEVAATTIKTHIR) constitute a DNA-binding region (H-T-H motif).

This sequence belongs to the MalT family. In terms of assembly, monomer in solution. Oligomerizes to an active state in the presence of the positive effectors ATP and maltotriose.

Its activity is regulated as follows. Activated by ATP and maltotriose, which are both required for DNA binding. Its function is as follows. Positively regulates the transcription of the maltose regulon whose gene products are responsible for uptake and catabolism of malto-oligosaccharides. Specifically binds to the promoter region of its target genes, recognizing a short DNA motif called the MalT box. This chain is HTH-type transcriptional regulator MalT, found in Yersinia enterocolitica serotype O:8 / biotype 1B (strain NCTC 13174 / 8081).